The sequence spans 361 residues: Epi-isozizaene synthase (361 aa).

The Mg(2+) site is built by Asp99, Asp103, Asn240, Ser244, and Glu248. The short motif at Asp99–Asp103 is the DDXXD motif element.

The protein belongs to the terpene synthase family. The cofactor is Mg(2+). Mn(2+) serves as cofactor. Requires Fe(3+) as cofactor.

It carries out the reaction (2E,6E)-farnesyl diphosphate = (+)-epi-isozizaene + diphosphate. It functions in the pathway sesquiterpene biosynthesis; epi-isozizaene biosynthesis. Its function is as follows. Catalyzes the cyclization of farnesyl diphosphate (FPP) to the sesquiterpene epi-isozizaene. The chain is Epi-isozizaene synthase (cyc1) from Streptomyces coelicolor (strain ATCC BAA-471 / A3(2) / M145).